Here is a 558-residue protein sequence, read N- to C-terminus: Mitochondrial nucleoid-associated protein 1 (558 aa).

The Extracellular portion of the chain corresponds to 1-527 (MGAAEPRMEV…VQCNTTIKKS (527 aa)). Disordered regions lie at residues 29–88 (KMRG…SWTA), 130–205 (LQRV…KLGT), and 222–269 (LSDR…KTQK). Positions 36–45 (SADQNVSQSK) are enriched in polar residues. The segment covering 51–81 (QKEKSPTRDLTRAKEKELEVDRPKRAVKAET) has biased composition (basic and acidic residues). Polar residues-rich tracts occupy residues 131–144 (QRVTTPWSPASDAT) and 187–197 (SSTQPHANPAT). The chain crosses the membrane as a helical span at residues 528-548 (GVGGLTMLFAGYFILCCNWSF). Over 549 to 558 (KHLKLQHWRK) the chain is Cytoplasmic.

The protein localises to the mitochondrion inner membrane. It localises to the mitochondrion matrix. It is found in the mitochondrion nucleoid. Its function is as follows. Critical regulator of mitochondrial DNA (mtDNA) abundance. Binds dsDNA throughout the mitochondrial genome without sequence specificity and controls mtDNA copy number by promoting its replication. Also plays important roles in mitochondrial metabolism and cell proliferation. The protein is Mitochondrial nucleoid-associated protein 1 of Mus musculus (Mouse).